The chain runs to 1011 residues: Liprin-beta-1 (1011 aa).

Serine 37 bears the Phosphoserine mark. The residue at position 39 (threonine 39) is a Phosphothreonine. Serine 40 is modified (phosphoserine). The stretch at 156–405 forms a coiled coil; it reads QQELLSRTSL…VPEEFHTTIL (250 aa). Lysine 322 bears the N6-acetyllysine mark. Disordered regions lie at residues 420–439 and 463–634; these read ETSE…EEND and KSSS…RDLG. 2 positions are modified to phosphoserine: serine 434 and serine 466. The segment covering 470-492 has biased composition (basic and acidic residues); sequence LKKETSDGEKETIQKTSEDRAPA. A Glycyl lysine isopeptide (Lys-Gly) (interchain with G-Cter in SUMO2) cross-link involves residue lysine 471. Residues serine 523 and serine 540 each carry the phosphoserine modification. The span at 546 to 556 shows a compositional bias: basic and acidic residues; it reads ETEKETAEHLD. Residue serine 579 is modified to Phosphoserine. The segment covering 584–598 has biased composition (basic residues); it reads KKSRGIMKLFGKLRR. 2 positions are modified to phosphoserine: serine 601 and serine 636. SAM domains are found at residues 647–711 and 719–782; these read WTKE…LGSE and LDFN…LRIN. Serine 794 carries the phosphoserine modification. Residues 804 to 876 form the SAM 3 domain; it reads VQKWTNHRVM…ATHFNLLIGA (73 aa). 3 positions are modified to phosphoserine: serine 999, serine 1001, and serine 1003. At threonine 1005 the chain carries Phosphothreonine.

It belongs to the liprin family. Liprin-beta subfamily. Forms homodimers and heterodimers. Interacts with S100A4 in a Ca(2+)-dependent mode. Part of a cortical microtubule stabilization complex (CMSC) composed of KANK1, PPFIA1, PPFIBP1, ERC1/ELKS, PHLDB2/LL5beta, CLASPs, KIF21A and possibly additional interactors; within CMSCs KANK1 and PHLDB2/LL5beta seem to be the core components for recruiting microtubule-binding proteins KIF21A and CLASPs, whereas PPFIA1, PPFIBP1 and ERC1/ELKS serve as scaffolds for protein clustering. Interacts with KANK1 (via CC1 domain, residues 244-339). In terms of tissue distribution, widely expressed. Absent in liver.

It localises to the cytoplasm. The protein resides in the cell cortex. Its function is as follows. May regulate the disassembly of focal adhesions. Did not bind receptor-like tyrosine phosphatases type 2A. The polypeptide is Liprin-beta-1 (PPFIBP1) (Homo sapiens (Human)).